The sequence spans 121 residues: MNNFKENDEKSTFGQYAELDKILDLKKGIPEDPCSLQYYFDQMAMCLTVFSQMNHYYRYGEYNRCKGNFKDFKWCLSTKSKAHEEAQEGLRKRRLQQWMKFRQGPNSEDIWKMRTSPKSSE.

This is an uncharacterized protein from Schizosaccharomyces pombe (strain 972 / ATCC 24843) (Fission yeast).